The primary structure comprises 360 residues: MRIKEHLKQLKPYQPGKPIEAVKSEYGLDKVVKLASNENPYGCSEAAKEALHHEIQQLALYPDGYSAALRTRLSKHLNVSETSLIFGNGSDEIIQIICRAFLNDKTNTVTAAPTFPQYKHNAVIEGAEVREIALRPDGSHDLDAMLEAIDEQTQVVWICSPNNPTGTYTSEGELLAFLERVPSRVLVVLDEAYYEYVTAEDYPETVPLLSKYSNLMILRTFSKAYGLAALRVGYGIADENLIRQIEPAREPFNTSRLGQAAAIAALDDQAFIASCVEQNNAGLQQYYDFAKTHGLKCYPSQTNFVLIDFKRPADELFQALLEKGYIVRSGNALGFPTSLRITIGTKEQNEEILAILAEIL.

Lysine 223 carries the post-translational modification N6-(pyridoxal phosphate)lysine.

This sequence belongs to the class-II pyridoxal-phosphate-dependent aminotransferase family. Histidinol-phosphate aminotransferase subfamily. In terms of assembly, homodimer. Requires pyridoxal 5'-phosphate as cofactor.

It carries out the reaction L-histidinol phosphate + 2-oxoglutarate = 3-(imidazol-4-yl)-2-oxopropyl phosphate + L-glutamate. It functions in the pathway amino-acid biosynthesis; L-histidine biosynthesis; L-histidine from 5-phospho-alpha-D-ribose 1-diphosphate: step 7/9. This is Histidinol-phosphate aminotransferase (hisC) from Bacillus subtilis (strain 168).